Reading from the N-terminus, the 479-residue chain is Adenosylhomocysteinase (479 aa).

Residues threonine 66, aspartate 142, and glutamate 203 each contribute to the substrate site. Position 204 to 206 (204 to 206) interacts with NAD(+); sequence TTT. 2 residues coordinate substrate: lysine 233 and aspartate 237. NAD(+) contacts are provided by residues asparagine 238, 267–272, glutamate 290, asparagine 325, 346–348, and asparagine 394; these read GYGDVG and IGH.

This sequence belongs to the adenosylhomocysteinase family. NAD(+) serves as cofactor.

The protein resides in the cytoplasm. The enzyme catalyses S-adenosyl-L-homocysteine + H2O = L-homocysteine + adenosine. It functions in the pathway amino-acid biosynthesis; L-homocysteine biosynthesis; L-homocysteine from S-adenosyl-L-homocysteine: step 1/1. In terms of biological role, may play a key role in the regulation of the intracellular concentration of adenosylhomocysteine. The chain is Adenosylhomocysteinase from Oleidesulfovibrio alaskensis (strain ATCC BAA-1058 / DSM 17464 / G20) (Desulfovibrio alaskensis).